We begin with the raw amino-acid sequence, 277 residues long: Cis-3,4-dihydrophenanthrene-3,4-diol dehydrogenase (277 aa).

Residues 10 to 37 (FLTG…TVLD) and Asp60 contribute to the NAD(+) site. Ser143 provides a ligand contact to substrate. Tyr156 serves as the catalytic Proton acceptor. Lys160 serves as a coordination point for NAD(+).

It belongs to the short-chain dehydrogenases/reductases (SDR) family. Homotetramer.

The enzyme catalyses (3S,4R)-3,4-dihydrophenanthrene-3,4-diol + NAD(+) = phenanthrene-3,4-diol + NADH + H(+). Its activity is regulated as follows. Inhibited by heavy metal such as Hg(2+) and by p-chloromercuribenzoate. Its function is as follows. Involved in the degradation of phenanthrene. Catalyzes the oxidation of cis-phenanthrene dihydrodiol (PDD) to yield phenanthrenediol. It can use either NAD or NADP as electron acceptor, however NAD is preferred to NADP. The polypeptide is Cis-3,4-dihydrophenanthrene-3,4-diol dehydrogenase (phnB) (Alcaligenes faecalis).